A 263-amino-acid polypeptide reads, in one-letter code: Sepiapterin reductase (263 aa).

NADP(+) contacts are provided by residues 18–24, 46–47, and 73–74; these read GASRGFG, RT, and DL. Residues 160-161 and Tyr173 each bind substrate; that span reads SL. Residue Lys177 participates in NADP(+) binding. Gly202 lines the substrate pocket. Residue 204–209 participates in NADP(+) binding; the sequence is LDTDMH. Asp260 contributes to the substrate binding site.

This sequence belongs to the sepiapterin reductase family. As to quaternary structure, homodimer.

It localises to the cytoplasm. It catalyses the reaction L-erythro-7,8-dihydrobiopterin + NADP(+) = L-sepiapterin + NADPH + H(+). It carries out the reaction (6R)-L-erythro-5,6,7,8-tetrahydrobiopterin + 2 NADP(+) = 6-pyruvoyl-5,6,7,8-tetrahydropterin + 2 NADPH + 2 H(+). Catalyzes the final one or two reductions in tetra-hydrobiopterin biosynthesis to form 5,6,7,8-tetrahydrobiopterin. This chain is Sepiapterin reductase (spr), found in Xenopus laevis (African clawed frog).